The sequence spans 68 residues: Beta-defensin 1 (68 aa).

The signal sequence occupies residues 1-21 (MRTSYLLLFTLCLLLSEMASG). Positions 22-32 (DNFLTGLGHRS) are excised as a propeptide. 3 disulfides stabilise this stretch: cysteine 37/cysteine 66, cysteine 44/cysteine 59, and cysteine 49/cysteine 67.

Belongs to the beta-defensin family. In terms of assembly, monomer. Homodimer.

It localises to the secreted. Its subcellular location is the membrane. Has bactericidal activity. May act as a ligand for C-C chemokine receptor CCR6. Positively regulates the sperm motility and bactericidal activity in a CCR6-dependent manner. Binds to CCR6 and triggers Ca2+ mobilization in the sperm which is important for its motility. This is Beta-defensin 1 (DEFB1) from Cercopithecus erythrogaster (Red-bellied monkey).